A 204-amino-acid polypeptide reads, in one-letter code: MKISKRQQDIYEFIKSEVKEKGYPPSVREIGEAVGLASSSTVHGHLARLEGKGLIRRDPTKPRAIEILSLEDEAETPNVVNIPIIGKVTAGMPITAIENIDEYFPLPEYMAAGETNVFMLEIDGESMINAGILDGDKVIVRQQSSAINGEIVVAMTDENEATCKRFYKEANHFRLQPENDALEPILLNNVTILGKVIGLYRDIR.

The segment at residues 27-47 (VREIGEAVGLASSSTVHGHLA) is a DNA-binding region (H-T-H motif). Residues serine 126 and lysine 164 each act as for autocatalytic cleavage activity in the active site.

The protein belongs to the peptidase S24 family. As to quaternary structure, homodimer.

The enzyme catalyses Hydrolysis of Ala-|-Gly bond in repressor LexA.. Represses a number of genes involved in the response to DNA damage (SOS response), including recA and lexA. In the presence of single-stranded DNA, RecA interacts with LexA causing an autocatalytic cleavage which disrupts the DNA-binding part of LexA, leading to derepression of the SOS regulon and eventually DNA repair. The polypeptide is LexA repressor (Listeria monocytogenes serotype 4b (strain CLIP80459)).